The following is a 448-amino-acid chain: Deoxyguanosinetriphosphate triphosphohydrolase-like protein (448 aa).

In terms of domain architecture, HD spans 67-260 (RLTHSLEVSQ…MELADDIAYG (194 aa)).

It belongs to the dGTPase family. Type 2 subfamily.

The polypeptide is Deoxyguanosinetriphosphate triphosphohydrolase-like protein (Aliivibrio fischeri (strain ATCC 700601 / ES114) (Vibrio fischeri)).